Consider the following 290-residue polypeptide: Membrane protein insertase YidC 2 (290 aa).

A signal peptide spans 1-19; the sequence is MKKKALLPLFLGIMIFLAG. Cysteine 20 is lipidated: N-palmitoyl cysteine. A lipid anchor (S-diacylglycerol cysteine) is attached at cysteine 20. 5 helical membrane passes run 56 to 76, 134 to 154, 176 to 196, 211 to 231, and 232 to 252; these read FGLAIIVLVLFIRLILLPFML, MLGCLPILIQMPIIMGLYFVL, PDIWITVIAGVLYFIQAVVSS, MVISPIMIIWISLQASSALGL, and YWSVSALFLVIQTHFANIYYS. A disordered region spans residues 266–290; that stretch reads YEREHNPSSKKKGKNTQVVSKKNKK. A compositionally biased stretch (polar residues) spans 280–290; it reads NTQVVSKKNKK.

This sequence belongs to the OXA1/ALB3/YidC family. Type 2 subfamily.

The protein localises to the cell membrane. Functionally, required for the insertion and/or proper folding and/or complex formation of integral membrane proteins into the membrane. Involved in integration of membrane proteins that insert both dependently and independently of the Sec translocase complex, as well as at least some lipoproteins. This Staphylococcus epidermidis (strain ATCC 35984 / DSM 28319 / BCRC 17069 / CCUG 31568 / BM 3577 / RP62A) protein is Membrane protein insertase YidC 2.